The sequence spans 281 residues: Tryptophan 2,3-dioxygenase (281 aa).

Substrate is bound by residues 50–54 (FIIQH), Tyr112, and Arg116. A heme-binding site is contributed by His239. Thr253 lines the substrate pocket.

This sequence belongs to the tryptophan 2,3-dioxygenase family. Homotetramer. The cofactor is heme.

It carries out the reaction L-tryptophan + O2 = N-formyl-L-kynurenine. Its pathway is amino-acid degradation; L-tryptophan degradation via kynurenine pathway; L-kynurenine from L-tryptophan: step 1/2. Functionally, heme-dependent dioxygenase that catalyzes the oxidative cleavage of the L-tryptophan (L-Trp) pyrrole ring and converts L-tryptophan to N-formyl-L-kynurenine. Catalyzes the oxidative cleavage of the indole moiety. This is Tryptophan 2,3-dioxygenase from Saccharopolyspora erythraea (strain ATCC 11635 / DSM 40517 / JCM 4748 / NBRC 13426 / NCIMB 8594 / NRRL 2338).